Consider the following 392-residue polypeptide: Sugar efflux transporter A (392 aa).

Residues 1–10 (MIWIMTMARR) lie on the Cytoplasmic side of the membrane. Residues 11–31 (MNGVYAAFMLVAFMMGVAGAL) form a helical membrane-spanning segment. Over 32 to 48 (QAPTLSLFLSREVGAQP) the chain is Periplasmic. The helical transmembrane segment at 49–69 (FWIGLFYTVNAIAGIGVSLWL) threads the bilayer. Topologically, residues 70-81 (AKRSDSQGDRRK) are cytoplasmic. The chain crosses the membrane as a helical span at residues 82 to 102 (LIIFCCLMAIGNALLFAFNRH). Residues 103–106 (YLTL) lie on the Periplasmic side of the membrane. The chain crosses the membrane as a helical span at residues 107–127 (ITCGVLLASLANTAMPQLFAL). Topologically, residues 128–149 (AREYADNSAREVVMFSSVMRAQ) are cytoplasmic. A helical membrane pass occupies residues 150–170 (LSLAWVIGPPLAFMLALNYGF). A topological domain (periplasmic) is located at residue threonine 171. A helical transmembrane segment spans residues 172-192 (VMFSIAAGIFTLSLVLIAFML). The Cytoplasmic segment spans residues 193–219 (PSVARVELPSENALSMQGGWQDSNVRM). A helical transmembrane segment spans residues 220–240 (LFVASTLMWTCNTMYIIDMPL). The Periplasmic segment spans residues 241 to 251 (WISSELGLPDK). Residues 252-272 (LAGFLMGTAAGLEIPAMILAG) traverse the membrane as a helical segment. Residues 273-282 (YYVKRYGKRR) lie on the Cytoplasmic side of the membrane. Residues 283-303 (MMVIAVAAGVLFYTGLIFFNS) form a helical membrane-spanning segment. At 304–308 (RMALM) the chain is on the periplasmic side. Residues 309–329 (TLQLFNAVFIGIVAGIGMLWF) form a helical membrane-spanning segment. Residues 330 to 342 (QDLMPGRAGAATT) lie on the Cytoplasmic side of the membrane. A helical transmembrane segment spans residues 343 to 363 (LFTNSISTGVILAGVIQGAIA). Residues 364–365 (QS) lie on the Periplasmic side of the membrane. The chain crosses the membrane as a helical span at residues 366 to 386 (WGHFAVYWVIAVISVVALFLT). Residues 387–392 (AKVKDV) are Cytoplasmic-facing.

It belongs to the major facilitator superfamily. Set transporter family.

The protein resides in the cell inner membrane. Involved in the efflux of sugars. The physiological role may be the detoxification of non-metabolizable sugar analogs. Can transport IPTG, lactose and glucose. Has broad substrate specificity, with preferences for glucosides or galactosides with alkyl or aryl substituents. This chain is Sugar efflux transporter A (setA), found in Escherichia coli (strain K12).